We begin with the raw amino-acid sequence, 560 residues long: Alpha-farnesene synthase (560 aa).

The Mg(2+) site is built by Asp308, Asp312, and Glu462. The DDXXD motif motif lies at 308 to 312 (DDIYD).

It belongs to the terpene synthase family. Tpsa subfamily. Mg(2+) serves as cofactor. As to expression, expressed in the rind tissues of ripe fruits.

It is found in the cytoplasm. It carries out the reaction (2E,6E)-farnesyl diphosphate = (3E,6E)-alpha-farnesene + diphosphate. It participates in secondary metabolite biosynthesis; terpenoid biosynthesis. In terms of biological role, sesquiterpene synthase producing exclusively alpha-farnesene. Associated with the production of sesquiterpenes responsible for the aroma of the fruit. This chain is Alpha-farnesene synthase, found in Cucumis melo (Muskmelon).